The following is a 68-amino-acid chain: Ferredoxin Fdx (68 aa).

Cys-12, Gln-13, Ala-16, Cys-18, and Cys-56 together coordinate [3Fe-4S] cluster.

[3Fe-4S] cluster serves as cofactor.

In terms of biological role, ferredoxin that is the redox partner of cytochrome CYP51, a sterol 14alpha-demethylase encoded by an adjacent gene. This is Ferredoxin Fdx from Mycobacterium tuberculosis (strain ATCC 25618 / H37Rv).